Reading from the N-terminus, the 1408-residue chain is DNA-directed RNA polymerase subunit beta' (1408 aa).

Zn(2+) is bound by residues Cys-70, Cys-72, Cys-85, and Cys-88. Mg(2+) contacts are provided by Asp-460, Asp-462, and Asp-464. 4 residues coordinate Zn(2+): Cys-814, Cys-888, Cys-895, and Cys-898.

It belongs to the RNA polymerase beta' chain family. As to quaternary structure, the RNAP catalytic core consists of 2 alpha, 1 beta, 1 beta' and 1 omega subunit. When a sigma factor is associated with the core the holoenzyme is formed, which can initiate transcription. The cofactor is Mg(2+). Requires Zn(2+) as cofactor.

The enzyme catalyses RNA(n) + a ribonucleoside 5'-triphosphate = RNA(n+1) + diphosphate. In terms of biological role, DNA-dependent RNA polymerase catalyzes the transcription of DNA into RNA using the four ribonucleoside triphosphates as substrates. This chain is DNA-directed RNA polymerase subunit beta', found in Serratia proteamaculans (strain 568).